Reading from the N-terminus, the 350-residue chain is Phosphotriesterase-related protein (350 aa).

A divalent metal cation-binding residues include His22, His24, Glu169, His201, His230, and Asp298.

Belongs to the metallo-dependent hydrolases superfamily. Phosphotriesterase family. Requires a divalent metal cation as cofactor.

The chain is Phosphotriesterase-related protein from Drosophila pseudoobscura pseudoobscura (Fruit fly).